We begin with the raw amino-acid sequence, 476 residues long: E1B 55 kDa protein (476 aa).

Disordered stretches follow at residues 1–20 (MERPNSSVAGLYSGLHGNGS) and 42–95 (FGSS…KMEN). Ser472 and Ser473 each carry phosphoserine.

It belongs to the adenoviridae E1B 55 kDa protein family. Interacts with host PML-4 and PML-5; this interaction promotes efficient subnuclear targeting of E1B-55K to PML nuclear bodies. Interacts with E4-ORF3 protein. Interacts with E4-ORF6 protein.

It is found in the host nucleus. It localises to the host cytoplasm. Functionally, plays a major role to prevent cellular inhibition of viral genome replication. Assembles an SCF-like E3 ubiquitin ligase complex based on the cellular proteins ELOB, ELOC, CUL5 and RBX1, in cooperation with viral E4orf6. This viral RING-type ligase ubiquitinates cellular substrates and targets them to proteasomal degradation: TP53/p53, LIG4, MRE11-RAD50-NBS1 (MRN) complex, ITGA3, DAXX and BLM. E1B-55K probably acts as the substrate-specific adapter of the SCF-like E3 ubiquitin ligase complex. Degradation of host TP53/p53 activity is essential for preventing E1A-induced TP53 accumulation that would otherwise lead to cell apoptosis and growth arrest. E1B-55K also inactivates TP53 transcription-factor activity by binding its transactivation domain. E1B-55K also functions as a SUMO1 E3 ligase for TP53 which causes the latter to be sequestered in promyelocytic leukemia (PML) nuclear bodies thereby contributing to maximal inhibition of TP53 function. The sequence is that of E1B 55 kDa protein from Human adenovirus F serotype 40 (HAdV-40).